A 396-amino-acid chain; its full sequence is Phosphoglycerate kinase (396 aa).

Residues 22–24 (DFN), Arg37, 60–63 (HFGR), Arg118, and Arg151 each bind substrate. ATP is bound by residues Lys201, Glu322, and 352–355 (GGDS).

Belongs to the phosphoglycerate kinase family. Monomer.

The protein localises to the cytoplasm. It catalyses the reaction (2R)-3-phosphoglycerate + ATP = (2R)-3-phospho-glyceroyl phosphate + ADP. It functions in the pathway carbohydrate degradation; glycolysis; pyruvate from D-glyceraldehyde 3-phosphate: step 2/5. This Wolbachia pipientis subsp. Culex pipiens (strain wPip) protein is Phosphoglycerate kinase.